We begin with the raw amino-acid sequence, 53 residues long: UPF0391 membrane protein BPSS2216 (53 aa).

Transmembrane regions (helical) follow at residues 5-25 (ALVF…GIAA) and 30-50 (IAKI…VLGV).

This sequence belongs to the UPF0391 family.

The protein resides in the cell membrane. The chain is UPF0391 membrane protein BPSS2216 from Burkholderia pseudomallei (strain K96243).